The primary structure comprises 127 residues: Protein ApaG (127 aa).

Residues 3-127 (EGKKYEIAVK…FILSVPRILH (125 aa)) form the ApaG domain.

The protein is Protein ApaG of Nitrosospira multiformis (strain ATCC 25196 / NCIMB 11849 / C 71).